We begin with the raw amino-acid sequence, 107 residues long: Universal stress protein B homolog (107 aa).

Helical transmembrane passes span 6–23 and 89–106; these read TILFALMVVTCVNWARYF and LFILSSALLGVTLLSSFI.

This sequence belongs to the universal stress protein B family.

It is found in the cell inner membrane. The protein is Universal stress protein B homolog of Vibrio atlanticus (strain LGP32) (Vibrio splendidus (strain Mel32)).